Reading from the N-terminus, the 351-residue chain is Uroporphyrinogen decarboxylase (351 aa).

Residues 26-30 (RQAGR), Phe45, Asp76, Tyr153, Ser208, and His323 contribute to the substrate site.

Belongs to the uroporphyrinogen decarboxylase family. As to quaternary structure, homodimer.

Its subcellular location is the cytoplasm. The catalysed reaction is uroporphyrinogen III + 4 H(+) = coproporphyrinogen III + 4 CO2. It functions in the pathway porphyrin-containing compound metabolism; protoporphyrin-IX biosynthesis; coproporphyrinogen-III from 5-aminolevulinate: step 4/4. Functionally, catalyzes the decarboxylation of four acetate groups of uroporphyrinogen-III to yield coproporphyrinogen-III. This chain is Uroporphyrinogen decarboxylase, found in Prochlorococcus marinus (strain SARG / CCMP1375 / SS120).